Consider the following 381-residue polypeptide: Succinyl-diaminopimelate desuccinylase (381 aa).

Histidine 71 contributes to the Zn(2+) binding site. Residue aspartate 73 is part of the active site. Position 104 (aspartate 104) interacts with Zn(2+). Glutamate 138 acts as the Proton acceptor in catalysis. Zn(2+) contacts are provided by glutamate 139, glutamate 167, and histidine 353.

The protein belongs to the peptidase M20A family. DapE subfamily. As to quaternary structure, homodimer. Zn(2+) is required as a cofactor. Co(2+) serves as cofactor.

The enzyme catalyses N-succinyl-(2S,6S)-2,6-diaminopimelate + H2O = (2S,6S)-2,6-diaminopimelate + succinate. Its pathway is amino-acid biosynthesis; L-lysine biosynthesis via DAP pathway; LL-2,6-diaminopimelate from (S)-tetrahydrodipicolinate (succinylase route): step 3/3. Functionally, catalyzes the hydrolysis of N-succinyl-L,L-diaminopimelic acid (SDAP), forming succinate and LL-2,6-diaminopimelate (DAP), an intermediate involved in the bacterial biosynthesis of lysine and meso-diaminopimelic acid, an essential component of bacterial cell walls. In Shewanella halifaxensis (strain HAW-EB4), this protein is Succinyl-diaminopimelate desuccinylase.